A 716-amino-acid polypeptide reads, in one-letter code: Exocyst complex component 8 (716 aa).

Ser15 is modified (phosphoserine). Positions 129-150 (GFLPGPAGVPREGSGTGEEGKQ) are disordered. The PH domain occupies 173–273 (YLVYNGDLVE…WLEVLEETKR (101 aa)). The segment covering 275-284 (LSDKRRREQE) has biased composition (basic and acidic residues). The disordered stretch occupies residues 275 to 319 (LSDKRRREQEEAAAPRAPPPVTSKGSNPFEDEDDEELATPEAEEE). Residues 303-319 (FEDEDDEELATPEAEEE) show a composition bias toward acidic residues. At Thr313 the chain carries Phosphothreonine.

This sequence belongs to the EXO84 family. In terms of assembly, the exocyst complex is composed of EXOC1, EXOC2, EXOC3, EXOC4, EXOC5, EXOC6, EXOC7 and EXOC8. Interacts (via PH domain) with GTP-bound RALA and RALB. Interacts with SH3BP1; required for the localization of both SH3BP1 and the exocyst to the leading edge of migrating cells.

The protein localises to the cytoplasm. It localises to the perinuclear region. Its subcellular location is the cell projection. It is found in the growth cone. Its function is as follows. Component of the exocyst complex involved in the docking of exocytic vesicles with fusion sites on the plasma membrane. This chain is Exocyst complex component 8 (Exoc8), found in Mus musculus (Mouse).